We begin with the raw amino-acid sequence, 254 residues long: 4-hydroxy-tetrahydrodipicolinate reductase (254 aa).

Residue 7-12 (GASGRI) coordinates NAD(+). Residue Arg35 participates in NADP(+) binding. NAD(+) contacts are provided by residues 91–93 (GTT) and 115–118 (AHNM). The Proton donor/acceptor role is filled by His147. (S)-2,3,4,5-tetrahydrodipicolinate is bound at residue His148. Lys151 acts as the Proton donor in catalysis. 157–158 (GT) is a (S)-2,3,4,5-tetrahydrodipicolinate binding site.

It belongs to the DapB family.

It localises to the cytoplasm. The catalysed reaction is (S)-2,3,4,5-tetrahydrodipicolinate + NAD(+) + H2O = (2S,4S)-4-hydroxy-2,3,4,5-tetrahydrodipicolinate + NADH + H(+). It catalyses the reaction (S)-2,3,4,5-tetrahydrodipicolinate + NADP(+) + H2O = (2S,4S)-4-hydroxy-2,3,4,5-tetrahydrodipicolinate + NADPH + H(+). It participates in amino-acid biosynthesis; L-lysine biosynthesis via DAP pathway; (S)-tetrahydrodipicolinate from L-aspartate: step 4/4. Functionally, catalyzes the conversion of 4-hydroxy-tetrahydrodipicolinate (HTPA) to tetrahydrodipicolinate. The chain is 4-hydroxy-tetrahydrodipicolinate reductase from Helicobacter pylori (strain HPAG1).